Reading from the N-terminus, the 206-residue chain is Protein YmaB (206 aa).

This Bacillus subtilis (strain 168) protein is Protein YmaB (ymaB).